Consider the following 148-residue polypeptide: Zinc finger X-chromosomal protein (148 aa).

2 consecutive C2H2-type zinc fingers follow at residues 16–38 (IECD…KMVH) and 76–98 (HICV…MRIH).

It belongs to the krueppel C2H2-type zinc-finger protein family. ZFX/ZFY subfamily.

Its subcellular location is the nucleus. Its function is as follows. Probable transcriptional activator. The polypeptide is Zinc finger X-chromosomal protein (ZFX) (Sus scrofa (Pig)).